The sequence spans 253 residues: Adapter protein MecA (253 aa).

It belongs to the MecA family. Homodimer.

Its function is as follows. Enables the recognition and targeting of unfolded and aggregated proteins to the ClpC protease or to other proteins involved in proteolysis. The chain is Adapter protein MecA from Streptococcus pyogenes serotype M6 (strain ATCC BAA-946 / MGAS10394).